A 424-amino-acid chain; its full sequence is GTPase Obg (424 aa).

The Obg domain maps to 1–158 (MFVDRAEVFV…RYISLELKIL (158 aa)). The interval 21-42 (SFRREKYVPRGGPDGGDGGKGG) is disordered. A compositionally biased stretch (gly residues) spans 32–42 (GPDGGDGGKGG). One can recognise an OBG-type G domain in the interval 159 to 331 (ADVGLLGFPN…LMKEAAAMLT (173 aa)). GTP is bound by residues 165–172 (GFPNVGKS), 190–194 (FTTLS), 212–215 (DIPG), 282–285 (NKAD), and 312–314 (SAA). Mg(2+) contacts are provided by S172 and T192. In terms of domain architecture, OCT spans 345–424 (KFIPEEKRFT…LNDFEFDYIL (80 aa)).

Belongs to the TRAFAC class OBG-HflX-like GTPase superfamily. OBG GTPase family. As to quaternary structure, monomer. The cofactor is Mg(2+).

The protein resides in the cytoplasm. In terms of biological role, an essential GTPase which binds GTP, GDP and possibly (p)ppGpp with moderate affinity, with high nucleotide exchange rates and a fairly low GTP hydrolysis rate. Plays a role in control of the cell cycle, stress response, ribosome biogenesis and in those bacteria that undergo differentiation, in morphogenesis control. The chain is GTPase Obg from Clostridium kluyveri (strain NBRC 12016).